The primary structure comprises 515 residues: Putative cytochrome P450 CYP13A2 (515 aa).

Cysteine 460 lines the heme pocket.

This sequence belongs to the cytochrome P450 family. Requires heme as cofactor.

In terms of biological role, cytochromes P450 are a group of heme-thiolate monooxygenases. They oxidize a variety of structurally unrelated compounds, including steroids, fatty acids, and xenobiotics. The chain is Putative cytochrome P450 CYP13A2 (cyp-13A2) from Caenorhabditis elegans.